Here is a 132-residue protein sequence, read N- to C-terminus: Glycine cleavage system H protein (132 aa).

The 83-residue stretch at leucine 24–arginine 106 folds into the Lipoyl-binding domain. Lysine 65 is modified (N6-lipoyllysine).

It belongs to the GcvH family. The glycine cleavage system is composed of four proteins: P, T, L and H. Requires (R)-lipoate as cofactor.

In terms of biological role, the glycine cleavage system catalyzes the degradation of glycine. The H protein shuttles the methylamine group of glycine from the P protein to the T protein. This chain is Glycine cleavage system H protein, found in Prochlorococcus marinus (strain MIT 9313).